Reading from the N-terminus, the 151-residue chain is Deoxyuridine 5'-triphosphate nucleotidohydrolase (151 aa).

Residues 70–72 (RSG), asparagine 83, and 87–89 (TID) contribute to the substrate site.

It belongs to the dUTPase family. Mg(2+) serves as cofactor.

The enzyme catalyses dUTP + H2O = dUMP + diphosphate + H(+). It functions in the pathway pyrimidine metabolism; dUMP biosynthesis; dUMP from dCTP (dUTP route): step 2/2. Functionally, this enzyme is involved in nucleotide metabolism: it produces dUMP, the immediate precursor of thymidine nucleotides and it decreases the intracellular concentration of dUTP so that uracil cannot be incorporated into DNA. The polypeptide is Deoxyuridine 5'-triphosphate nucleotidohydrolase (Ruegeria pomeroyi (strain ATCC 700808 / DSM 15171 / DSS-3) (Silicibacter pomeroyi)).